A 401-amino-acid chain; its full sequence is 2,3,4,5-tetrahydropyridine-2,6-dicarboxylate N-succinyltransferase (401 aa).

Glu-269 serves as the catalytic Acyl-anhydride intermediate. Residues Arg-271, Gly-286, Ser-289, Ala-312, 327–328, Gly-335, and Lys-364 each bind succinyl-CoA; that span reads DA.

It belongs to the type 2 tetrahydrodipicolinate N-succinyltransferase family. Homotrimer.

It localises to the cytoplasm. It carries out the reaction (S)-2,3,4,5-tetrahydrodipicolinate + succinyl-CoA + H2O = (S)-2-succinylamino-6-oxoheptanedioate + CoA. It functions in the pathway amino-acid biosynthesis; L-lysine biosynthesis via DAP pathway; LL-2,6-diaminopimelate from (S)-tetrahydrodipicolinate (succinylase route): step 1/3. Its function is as follows. Catalyzes the conversion of the cyclic tetrahydrodipicolinate (THDP) into the acyclic N-succinyl-L-2-amino-6-oxopimelate using succinyl-CoA. The chain is 2,3,4,5-tetrahydropyridine-2,6-dicarboxylate N-succinyltransferase from Helicobacter pylori (strain ATCC 700392 / 26695) (Campylobacter pylori).